A 303-amino-acid chain; its full sequence is uncharacterized protein (303 aa).

This is an uncharacterized protein from Magallana gigas (Pacific oyster).